The following is a 262-amino-acid chain: Spindlin-1 (262 aa).

The segment at 1–51 (MKTPFGKTPGQRSRADAGHAGVSANMMKKRTSHKKHRSSVGPSKPVSQPRR) is disordered. Residues K7 and K28 each participate in a glycyl lysine isopeptide (Lys-Gly) (interchain with G-Cter in SUMO2) cross-link. The segment covering 27–38 (MKKRTSHKKHRS) has biased composition (basic residues). Residue K44 is modified to N6-acetyllysine; alternate. A Glycyl lysine isopeptide (Lys-Gly) (interchain with G-Cter in SUMO2); alternate cross-link involves residue K44. Residues 53 to 116 (IVGCRIQHGW…RVSALEVLPD (64 aa)) are tudor-like domain 1. The tract at residues 93–98 (GFDCVY) is histone H3K4me3 and H3R8me2a binding. A phosphoserine; by AURKA mark is found at S109 and S124. The tract at residues 132–193 (MIGKAVEHMF…DYKEGDLRIM (62 aa)) is tudor-like domain 2. A region of interest (histone H3K4me3 and H3R8me2a binding) is located at residue E142. A Phosphoserine modification is found at S199. Residues 213–262 (LVGKQVEYAKEDGSKRTGMVIHQVEAKPSVYFIKFDDDFHIYVYDLVKTS) form a tudor-like domain 3 region. The tract at residues 250–252 (DFH) is histone H3K4me3 and H3R8me2a binding.

It belongs to the SPIN/STSY family. As to quaternary structure, homodimer; may form higher-order oligomers. Interacts with TCF7L2/TCF4; the interaction is direct. Interacts with HABP4 and SERBP1. Interacts with SPINDOC; SPINDOC stabilizes SPIN1 and enhances its association with bivalent H3K4me3K9me3 mark. Interacts with SPOCD1; promoting recruitment of PIWIL4 and SPOCD1 to transposons. Post-translationally, phosphorylated during oocyte meiotic maturation. Highly expressed in ovarian cancer tissues.

It localises to the nucleus. It is found in the nucleolus. Chromatin reader that specifically recognizes and binds histone H3 both trimethylated at 'Lys-4' and 'Lys-9' (H3K4me3K9me3) and is involved in piRNA-mediated retrotransposon silencing during spermatogenesis. Plays a key role in the initiation of the PIWIL4-piRNA pathway, a pathway that directs transposon DNA methylation and silencing in the male embryonic germ cells, by promoting recruitment of DNA methylation machinery to transposons: binds young, but not old, LINE1 transposons, which are specifically marked with H3K4me3K9me3, and promotes the recruitment of PIWIL4 and SPOCD1 to transposons, leading to piRNA-directed DNA methylation. Also recognizes and binds histone H3 both trimethylated at 'Lys-4' and asymmetrically dimethylated at 'Arg-8' (H3K4me3 and H3R8me2a) and acts as an activator of Wnt signaling pathway downstream of PRMT2. In case of cancer, promotes cell cancer proliferation via activation of the Wnt signaling pathway. Overexpression induces metaphase arrest and chromosomal instability. Localizes to active rDNA loci and promotes the expression of rRNA genes. May play a role in cell-cycle regulation during the transition from gamete to embryo. Involved in oocyte meiotic resumption, a process that takes place before ovulation to resume meiosis of oocytes blocked in prophase I: may act by regulating maternal transcripts to control meiotic resumption. The chain is Spindlin-1 from Homo sapiens (Human).